We begin with the raw amino-acid sequence, 1018 residues long: DNA polymerase gamma (1018 aa).

The protein belongs to the DNA polymerase type-A family. Requires Mg(2+) as cofactor.

Its subcellular location is the mitochondrion. It catalyses the reaction DNA(n) + a 2'-deoxyribonucleoside 5'-triphosphate = DNA(n+1) + diphosphate. Involved in the replication of mitochondrial DNA. This Schizosaccharomyces pombe (strain 972 / ATCC 24843) (Fission yeast) protein is DNA polymerase gamma (mip1).